Reading from the N-terminus, the 313-residue chain is Pantothenate synthetase (313 aa).

Residue 43-50 (MGALHEGH) participates in ATP binding. H50 serves as the catalytic Proton donor. (R)-pantoate is bound at residue Q75. Residue Q75 coordinates beta-alanine. 161–164 (GEKD) lines the ATP pocket. Q167 lines the (R)-pantoate pocket. ATP contacts are provided by residues V190 and 198–201 (LSSR).

The protein belongs to the pantothenate synthetase family. In terms of assembly, homodimer.

It is found in the cytoplasm. It carries out the reaction (R)-pantoate + beta-alanine + ATP = (R)-pantothenate + AMP + diphosphate + H(+). It functions in the pathway cofactor biosynthesis; (R)-pantothenate biosynthesis; (R)-pantothenate from (R)-pantoate and beta-alanine: step 1/1. In terms of biological role, catalyzes the condensation of pantoate with beta-alanine in an ATP-dependent reaction via a pantoyl-adenylate intermediate. The polypeptide is Pantothenate synthetase (Mycobacterium sp. (strain KMS)).